The primary structure comprises 361 residues: UDP-N-acetylglucosamine--N-acetylmuramyl-(pentapeptide) pyrophosphoryl-undecaprenol N-acetylglucosamine transferase (361 aa).

UDP-N-acetyl-alpha-D-glucosamine is bound by residues 11 to 13 (TGG), Asn-120, Arg-161, Ser-188, and Gln-282.

Belongs to the glycosyltransferase 28 family. MurG subfamily.

It is found in the cell inner membrane. It carries out the reaction di-trans,octa-cis-undecaprenyl diphospho-N-acetyl-alpha-D-muramoyl-L-alanyl-D-glutamyl-meso-2,6-diaminopimeloyl-D-alanyl-D-alanine + UDP-N-acetyl-alpha-D-glucosamine = di-trans,octa-cis-undecaprenyl diphospho-[N-acetyl-alpha-D-glucosaminyl-(1-&gt;4)]-N-acetyl-alpha-D-muramoyl-L-alanyl-D-glutamyl-meso-2,6-diaminopimeloyl-D-alanyl-D-alanine + UDP + H(+). The protein operates within cell wall biogenesis; peptidoglycan biosynthesis. Functionally, cell wall formation. Catalyzes the transfer of a GlcNAc subunit on undecaprenyl-pyrophosphoryl-MurNAc-pentapeptide (lipid intermediate I) to form undecaprenyl-pyrophosphoryl-MurNAc-(pentapeptide)GlcNAc (lipid intermediate II). The polypeptide is UDP-N-acetylglucosamine--N-acetylmuramyl-(pentapeptide) pyrophosphoryl-undecaprenol N-acetylglucosamine transferase (Prochlorococcus marinus (strain MIT 9303)).